The chain runs to 207 residues: Glycerol-3-phosphate acyltransferase (207 aa).

A run of 6 helical transmembrane segments spans residues 1-21, 42-62, 65-85, 105-125, 138-158, and 159-179; these read MIIIAYLLGSIQTGLWIGKYF, ILGVKAGIVTLTIDILKGTLA, IPIILGITTISPFFIGFFAII, AGVLLGFAPSFFLYLLVIFLL, ITVAVVGILSVLIFPLVGFIL, and TDYDWIFTTVVILMALTIIIR.

This sequence belongs to the PlsY family. In terms of assembly, probably interacts with PlsX.

It localises to the cell membrane. The enzyme catalyses an acyl phosphate + sn-glycerol 3-phosphate = a 1-acyl-sn-glycero-3-phosphate + phosphate. It functions in the pathway lipid metabolism; phospholipid metabolism. Its function is as follows. Catalyzes the transfer of an acyl group from acyl-phosphate (acyl-PO(4)) to glycerol-3-phosphate (G3P) to form lysophosphatidic acid (LPA). This enzyme utilizes acyl-phosphate as fatty acyl donor, but not acyl-CoA or acyl-ACP. This Streptococcus agalactiae serotype Ia (strain ATCC 27591 / A909 / CDC SS700) protein is Glycerol-3-phosphate acyltransferase.